The sequence spans 274 residues: 2,3,4,5-tetrahydropyridine-2,6-dicarboxylate N-succinyltransferase (274 aa).

It belongs to the transferase hexapeptide repeat family.

Its subcellular location is the cytoplasm. The catalysed reaction is (S)-2,3,4,5-tetrahydrodipicolinate + succinyl-CoA + H2O = (S)-2-succinylamino-6-oxoheptanedioate + CoA. It participates in amino-acid biosynthesis; L-lysine biosynthesis via DAP pathway; LL-2,6-diaminopimelate from (S)-tetrahydrodipicolinate (succinylase route): step 1/3. The polypeptide is 2,3,4,5-tetrahydropyridine-2,6-dicarboxylate N-succinyltransferase (Salmonella heidelberg (strain SL476)).